The chain runs to 144 residues: Cytochrome c-type biogenesis protein CcmE (144 aa).

At 1 to 7 (MKPRHKR) the chain is on the cytoplasmic side. A helical; Signal-anchor for type II membrane protein membrane pass occupies residues 8-28 (ALIIIAALIAIGVAALLILNA). The Periplasmic segment spans residues 29–144 (LNSNIALYVT…DQAQKNGSAK (116 aa)). Heme contacts are provided by His-121 and Tyr-125.

It belongs to the CcmE/CycJ family.

It localises to the cell inner membrane. In terms of biological role, heme chaperone required for the biogenesis of c-type cytochromes. Transiently binds heme delivered by CcmC and transfers the heme to apo-cytochromes in a process facilitated by CcmF and CcmH. This chain is Cytochrome c-type biogenesis protein CcmE, found in Polynucleobacter necessarius subsp. necessarius (strain STIR1).